A 469-amino-acid polypeptide reads, in one-letter code: Glutamate--tRNA ligase 1 (469 aa).

Residues 10-20 carry the 'HIGH' region motif; that stretch reads PSPTGYLHIGG. Zn(2+)-binding residues include Cys99, Cys101, Cys126, and Asp128. The 'KMSKS' region motif lies at 237 to 241; sequence RLSKR. Position 240 (Lys240) interacts with ATP.

Belongs to the class-I aminoacyl-tRNA synthetase family. Glutamate--tRNA ligase type 1 subfamily. As to quaternary structure, monomer. The cofactor is Zn(2+).

It localises to the cytoplasm. The enzyme catalyses tRNA(Glu) + L-glutamate + ATP = L-glutamyl-tRNA(Glu) + AMP + diphosphate. Functionally, catalyzes the attachment of glutamate to tRNA(Glu) in a two-step reaction: glutamate is first activated by ATP to form Glu-AMP and then transferred to the acceptor end of tRNA(Glu). This chain is Glutamate--tRNA ligase 1, found in Coxiella burnetii (strain CbuK_Q154) (Coxiella burnetii (strain Q154)).